The following is a 179-amino-acid chain: ECF RNA polymerase sigma factor SigF (179 aa).

The tract at residues 33-93 (RLRAYFMRRM…KLIDHWRRRK (61 aa)) is sigma-70 factor domain-2. Positions 51-64 (DLVQETLLAVHLKR) match the Polymerase core binding motif. The interval 123 to 170 (ALASLPQRQRMLVSDVKLTGLSLAEAGARAGISEGAAKVALHRALKAL) is sigma-70 factor domain-4. Residues 145-164 (LAEAGARAGISEGAAKVALH) constitute a DNA-binding region (H-T-H motif).

It belongs to the sigma-70 factor family. ECF subfamily.

The protein resides in the cytoplasm. Its function is as follows. Sigma factors are initiation factors that promote the attachment of RNA polymerase to specific initiation sites and are then released. Extracytoplasmic function (ECF) sigma factors are held in an inactive form by a cognate anti-sigma factor (NrsF in this case) until they are released. Up-regulates expression of 4 operons (sigF-nrsF, CCNA_02834, CCNA_03001 to CCNA_02999 and CCNA_03363 to CCNA_03366) in response to potassium dichromate (K(2)Cr(2)O(7)) or cadmium chloride (CdCl(2)). Overexpression of sigF leads to higher expression of its regulon. This chain is ECF RNA polymerase sigma factor SigF, found in Caulobacter vibrioides (strain NA1000 / CB15N) (Caulobacter crescentus).